A 709-amino-acid polypeptide reads, in one-letter code: Dibasic-processing endoprotease (709 aa).

A signal peptide spans 1–22 (MHPALLCGPILAIFLQFLVSSC). Propeptides lie at residues 23–82 (SPLE…IRKR) and 83–102 (GIDAGILELERQTPRWRYKR). Residues 103–668 (DASESDELLN…QPVLEPSYRE (566 aa)) lie on the Lumenal side of the membrane. A Peptidase S8 domain is found at 128–440 (QWHIFNSNNP…FGKLDASKFV (313 aa)). N-linked (GlcNAc...) asparagine glycosylation is present at Asn155. Active-site charge relay system residues include Asp162 and His200. 2 cysteine pairs are disulfide-bonded: Cys216–Cys363 and Cys308–Cys338. Catalysis depends on Ser371, which acts as the Charge relay system. One can recognise a P/Homo B domain in the interval 449–588 (VNPQTWLIAP…QLALWGESEN (140 aa)). N-linked (GlcNAc...) asparagine glycans are attached at residues Asn463, Asn471, and Asn620. A helical membrane pass occupies residues 669-693 (IVAFITFFLLFAFIFVAVIWTWISA). Over 694-709 (FWKAKAPPPLSQQEIA) the chain is Cytoplasmic.

This sequence belongs to the peptidase S8 family. Furin subfamily. Requires Ca(2+) as cofactor. In terms of processing, N-glycosylated.

The protein localises to the golgi apparatus. Its subcellular location is the trans-Golgi network membrane. In terms of biological role, membrane-bound, subtilisin-like serine protease that processes the P-factor precursor and other precursor proteins. Essential for cell viability. Cleaves substrate on the C-terminal side of dibasic residues. The polypeptide is Dibasic-processing endoprotease (krp1) (Schizosaccharomyces pombe (strain 972 / ATCC 24843) (Fission yeast)).